Reading from the N-terminus, the 159-residue chain is Eukaryotic translation initiation factor 5A (159 aa).

Lysine 55 bears the Hypusine mark.

The protein belongs to the eIF-5A family. In terms of processing, lys-55 undergoes hypusination, a unique post-translational modification that consists in the addition of a butylamino group from spermidine to lysine side chain, leading to the formation of the unusual amino acid hypusine. eIF-5As are the only known proteins to undergo this modification, which is essential for their function.

The protein resides in the cytoplasm. In terms of biological role, translation factor that promotes translation elongation and termination, particularly upon ribosome stalling at specific amino acid sequence contexts. Binds between the exit (E) and peptidyl (P) site of the ribosome and promotes rescue of stalled ribosome: specifically required for efficient translation of polyproline-containing peptides as well as other motifs that stall the ribosome. Acts as a ribosome quality control (RQC) cofactor by joining the RQC complex to facilitate peptidyl transfer during CAT tailing step. In Dictyostelium discoideum (Social amoeba), this protein is Eukaryotic translation initiation factor 5A (eif5a).